A 284-amino-acid chain; its full sequence is GTP cyclohydrolase MptA (284 aa).

This sequence belongs to the GTP cyclohydrolase IV family. Homodimer. Fe(2+) serves as cofactor.

The catalysed reaction is GTP + H2O = 7,8-dihydroneopterin 2',3'-cyclic phosphate + formate + diphosphate + H(+). Its pathway is cofactor biosynthesis; 5,6,7,8-tetrahydromethanopterin biosynthesis. Converts GTP to 7,8-dihydro-D-neopterin 2',3'-cyclic phosphate, the first intermediate in the biosynthesis of coenzyme methanopterin. This Thermoplasma volcanium (strain ATCC 51530 / DSM 4299 / JCM 9571 / NBRC 15438 / GSS1) protein is GTP cyclohydrolase MptA.